A 462-amino-acid polypeptide reads, in one-letter code: UDP-N-acetylmuramate--L-alanine ligase (462 aa).

Residue 116-122 participates in ATP binding; it reads GAHGKTT.

The protein belongs to the MurCDEF family.

The protein resides in the cytoplasm. It catalyses the reaction UDP-N-acetyl-alpha-D-muramate + L-alanine + ATP = UDP-N-acetyl-alpha-D-muramoyl-L-alanine + ADP + phosphate + H(+). Its pathway is cell wall biogenesis; peptidoglycan biosynthesis. Functionally, cell wall formation. In Desulforamulus reducens (strain ATCC BAA-1160 / DSM 100696 / MI-1) (Desulfotomaculum reducens), this protein is UDP-N-acetylmuramate--L-alanine ligase.